The sequence spans 320 residues: Reticulocalbin-2 (320 aa).

An N-terminal signal peptide occupies residues 1 to 25; that stretch reads MRLGPRPAVLGLLLLLLLYAAVAGA. EF-hand domains lie at 64–99 and 100–135; these read EQQRRLQSIIKKIDSDSDGFLTENELSQWIQMSFKH and YAMQEAKQQFVEYDKNSDGTVTWDEYNVQMYDRVID. 9 residues coordinate Ca(2+): aspartate 77, aspartate 79, aspartate 81, glutamate 88, aspartate 113, asparagine 115, aspartate 117, threonine 119, and glutamate 124. The residue at position 140 (threonine 140) is a Phosphothreonine. EF-hand domains lie at 150-185, 189-224, 230-265, and 266-301; these read FRQLHLKDKKRFEKANQDSGPGLNLEEFIAFEHPEE, MTEFVIQEALEEHDKNGDGFVSLEEFLGDYRRDPTA, WILVEKDRFVNDYDKDSDGRLDPQELLSWVVPNNQG, and IAQEEALHLIDEMDLNSDKKLSEEEILENQDLFLTS. 16 residues coordinate Ca(2+): aspartate 167, glutamate 176, aspartate 202, asparagine 204, aspartate 206, glutamate 213, aspartate 243, aspartate 245, aspartate 247, arginine 249, glutamate 254, aspartate 279, asparagine 281, aspartate 283, lysine 285, and glutamate 290. A Prevents secretion from ER motif is present at residues 317–320; that stretch reads HDEL.

Belongs to the CREC family. Binds the snake venom phospholipase complex taipoxin. In terms of tissue distribution, ubiquitous.

It localises to the endoplasmic reticulum lumen. In terms of biological role, not known. Binds calcium. The sequence is that of Reticulocalbin-2 (Rcn2) from Rattus norvegicus (Rat).